The chain runs to 102 residues: Small ribosomal subunit protein uS10 (102 aa).

This sequence belongs to the universal ribosomal protein uS10 family. As to quaternary structure, part of the 30S ribosomal subunit.

In terms of biological role, involved in the binding of tRNA to the ribosomes. In Exiguobacterium sp. (strain ATCC BAA-1283 / AT1b), this protein is Small ribosomal subunit protein uS10.